Consider the following 757-residue polypeptide: Subtilisin-like protease SBT1.7 (757 aa).

The first 24 residues, 1–24, serve as a signal peptide directing secretion; it reads MSSSFLSSTAFFLLLCLGFCHVSS. The propeptide occupies 25 to 106; it reads SSSDQGTYIV…VLPEHRYELH (82 aa). Residues 31–106 form the Inhibitor I9 domain; it reads TYIVHMAKSQ…VLPEHRYELH (76 aa). Positions 102-610 constitute a Peptidase S8 domain; it reads RYELHTTRTP…AGHVSPTTAT (509 aa). The active-site Charge relay system is D139. Residue N170 is glycosylated (N-linked (GlcNAc...) asparagine). The tract at residues 196-219 is disordered; it reads PIDESKESRSPRDDDGHGTHTSST. The span at 198–213 shows a compositional bias: basic and acidic residues; it reads DESKESRSPRDDDGHG. Residue H212 is the Charge relay system of the active site. N-linked (GlcNAc...) asparagine glycosylation is found at N352, N376, and N379. S542 serves as the catalytic Charge relay system. 2 N-linked (GlcNAc...) asparagine glycosylation sites follow: N631 and N644.

The protein belongs to the peptidase S8 family. Expressed in immature siliques and at lower levels in stems and flowers. Widely expressed at low levels.

The protein resides in the secreted. The protein localises to the cell wall. With respect to regulation, activated by calcium. Inhibited by the serine protease inhibitors 4-(2-aminoethyl)benzenesulphonyl fluoride (AEBSF), PMSF, di-isopropyl phosphofluoridate (DFP) and soybean trypsin inhibitor (SBTI). Not inhibited by benzamidine or iodoacetamide. Leupeptin and pepstatin A have a minor inhibitory action. Its function is as follows. Serine protease. Has a substrate preference for the hydrophobic residues Phe and Ala and the basic residue Asp in the P1 position, and for Asp, Leu or Ala in the P1' position. Essential for mucilage release from seed coats. Triggers the accumulation and/or activation of cell wall modifying enzymes necessary either for the loosening of the outer primary cell wall, or to facilitate swelling of the mucilage. In Arabidopsis thaliana (Mouse-ear cress), this protein is Subtilisin-like protease SBT1.7.